We begin with the raw amino-acid sequence, 551 residues long: Synapse-associated protein of 47 kDa (551 aa).

Disordered stretches follow at residues 20-72 (AGDE…AGKR) and 117-198 (AMPA…GQGK). Composition is skewed to low complexity over residues 26–59 (PAPT…AAAA), 117–128 (AMPAMPSIPSIP), and 137–146 (DGAEGAEGAV). Serine 178 and serine 182 each carry phosphoserine. Positions 182–197 (SGGGTPTGDEGQIGQG) are enriched in gly residues. Position 186 is a phosphothreonine (threonine 186). The BSD domain occupies 295 to 347 (VDFEFSYDTAYPTAIAIMAEDKALETMRFELVPKIITEENFWRNYFYRVSLII). The interval 360–391 (VGQASSGEDANEVATKEKKSKTAEPAKGDSSV) is disordered. Residues 373–386 (ATKEKKSKTAEPAK) show a composition bias toward basic and acidic residues. The residue at position 433 (serine 433) is a Phosphoserine. The interval 487–551 (KDYEVVDEGG…DLIEDTDDLK (65 aa)) is disordered. The segment covering 514-523 (DDTEADEDEP) has biased composition (acidic residues). Polar residues predominate over residues 524–535 (TISNLRTRSTNN). Threonine 530 carries the post-translational modification Phosphothreonine. The span at 536 to 551 (DWEEYADLIEDTDDLK) shows a compositional bias: acidic residues.

As to expression, expressed specifically in neurons and transported to synaptic terminals.

The polypeptide is Synapse-associated protein of 47 kDa (Sap47) (Drosophila melanogaster (Fruit fly)).